We begin with the raw amino-acid sequence, 194 residues long: Peptidyl-tRNA hydrolase (194 aa).

Tyr17 serves as a coordination point for tRNA. Residue His22 is the Proton acceptor of the active site. Phe69, Asn71, and Asn117 together coordinate tRNA.

It belongs to the PTH family. In terms of assembly, monomer.

The protein localises to the cytoplasm. The enzyme catalyses an N-acyl-L-alpha-aminoacyl-tRNA + H2O = an N-acyl-L-amino acid + a tRNA + H(+). In terms of biological role, hydrolyzes ribosome-free peptidyl-tRNAs (with 1 or more amino acids incorporated), which drop off the ribosome during protein synthesis, or as a result of ribosome stalling. Functionally, catalyzes the release of premature peptidyl moieties from peptidyl-tRNA molecules trapped in stalled 50S ribosomal subunits, and thus maintains levels of free tRNAs and 50S ribosomes. The protein is Peptidyl-tRNA hydrolase of Renibacterium salmoninarum (strain ATCC 33209 / DSM 20767 / JCM 11484 / NBRC 15589 / NCIMB 2235).